The sequence spans 150 residues: Monothiol glutaredoxin-S13 (150 aa).

The tract at residues 30–52 (PSSSSSSLSWLTSGSPKPTSISN) is disordered. Over residues 31–44 (SSSSSSLSWLTSGS) the composition is skewed to low complexity. In terms of domain architecture, Glutaredoxin spans 53–149 (KRSSNLVVME…PTLRQAGALW (97 aa)). Cys73 is a [2Fe-2S] cluster binding site. The Responsive for interaction with TGA factors signature appears at 147-150 (ALWL).

Belongs to the glutaredoxin family. CC-type subfamily.

The protein resides in the cytoplasm. It is found in the nucleus. May only reduce GSH-thiol disulfides, but not protein disulfides. The polypeptide is Monothiol glutaredoxin-S13 (GRXS13) (Arabidopsis thaliana (Mouse-ear cress)).